The primary structure comprises 231 residues: Deoxyribose-phosphate aldolase (231 aa).

D97 acts as the Proton donor/acceptor in catalysis. K162 (schiff-base intermediate with acetaldehyde) is an active-site residue. Catalysis depends on K191, which acts as the Proton donor/acceptor.

It belongs to the DeoC/FbaB aldolase family. DeoC type 1 subfamily.

The protein localises to the cytoplasm. It carries out the reaction 2-deoxy-D-ribose 5-phosphate = D-glyceraldehyde 3-phosphate + acetaldehyde. It functions in the pathway carbohydrate degradation; 2-deoxy-D-ribose 1-phosphate degradation; D-glyceraldehyde 3-phosphate and acetaldehyde from 2-deoxy-alpha-D-ribose 1-phosphate: step 2/2. Functionally, catalyzes a reversible aldol reaction between acetaldehyde and D-glyceraldehyde 3-phosphate to generate 2-deoxy-D-ribose 5-phosphate. The protein is Deoxyribose-phosphate aldolase of Caldanaerobacter subterraneus subsp. tengcongensis (strain DSM 15242 / JCM 11007 / NBRC 100824 / MB4) (Thermoanaerobacter tengcongensis).